We begin with the raw amino-acid sequence, 716 residues long: Leucine-rich repeat neuronal protein 1 (716 aa).

The first 25 residues, 1–25 (MARMSFVIAACQLVLGLLMTSLTES), serve as a signal peptide directing secretion. The LRRNT domain occupies 26 to 72 (SIQNSECPQLCVCEIRPWFTPQSTYREATTVDCNDLRLTRIPSNLSS). Residues 26-631 (SIQNSECPQL…DISDQETSTA (606 aa)) lie on the Extracellular side of the membrane. 11 LRR repeats span residues 73 to 95 (DTQV…QQLF), 96 to 117 (NLTE…GLAN), 120 to 141 (QLTT…CLQD), 144 to 165 (NLQE…AFAG), 168 to 189 (NLLR…WFDS), 192 to 213 (NLEI…NFKP), 216 to 237 (NLRS…ALVG), 240 to 261 (SLES…ALQK), 264 to 285 (NLKF…DFKN), 313 to 335 (ELTK…AFRS), and 338 to 359 (ALES…TVES). Residues Asn96 and Asn117 are each glycosylated (N-linked (GlcNAc...) asparagine). The LRRCT domain maps to 371–424 (NPLRCDCVIHWINSNKTNIRFMEPLSMFCAMPPEYKGHQVKEVLIQDSSEQCLP). N-linked (GlcNAc...) asparagine glycosylation occurs at Asn385. The region spanning 424 to 515 (PMISHDSFPN…GADTRVATIK (92 aa)) is the Ig-like C2-type domain. A disulfide bridge connects residues Cys447 and Cys499. An N-linked (GlcNAc...) asparagine glycan is attached at Asn517. A Fibronectin type-III domain is found at 525 to 617 (QVLKIYVKQT…SCVNVTTKNA (93 aa)). A helical membrane pass occupies residues 632-652 (LAAVMGSMFAVISLASIAVYF). Residues 653–716 (AKRFKRKNYH…VDTSRSYYMW (64 aa)) are Cytoplasmic-facing. A compositionally biased stretch (basic and acidic residues) spans 691–700 (DSEKDKDGSA). The interval 691-716 (DSEKDKDGSADTKPTQVDTSRSYYMW) is disordered. Polar residues predominate over residues 702–716 (TKPTQVDTSRSYYMW).

The protein resides in the membrane. The sequence is that of Leucine-rich repeat neuronal protein 1 (LRRN1) from Homo sapiens (Human).